Here is a 256-residue protein sequence, read N- to C-terminus: Complex I assembly factor TIMMDC1, mitochondrial (256 aa).

A disordered region spans residues 1–27; that stretch reads MAQSDPPKSPDPPLPTSIRNPQTPESG. 2 helical membrane passes run 111–131 and 159–179; these read WGWRVAAFVTIFNSVSTGLTV and VGLLSGSLIGAALGVPAGALI.

Belongs to the Tim17/Tim22/Tim23 family. As to quaternary structure, associates with the intermediate 315 kDa subcomplex of incompletely assembled complex I.

Its subcellular location is the mitochondrion membrane. In terms of biological role, chaperone protein involved in the assembly of the mitochondrial NADH:ubiquinone oxidoreductase complex (complex I). Participates in constructing the membrane arm of complex I. The protein is Complex I assembly factor TIMMDC1, mitochondrial (timmdc1) of Xenopus laevis (African clawed frog).